Consider the following 471-residue polypeptide: 5-hydroxytryptamine receptor 2A (471 aa).

Over 1 to 80 (MDILCEENTS…LQEKNWSALL (80 aa)) the chain is Extracellular. Asparagine 38 is a glycosylation site (N-linked (GlcNAc...) asparagine). The helical transmembrane segment at 81-97 (TAVVIILTIAGNILVIM) threads the bilayer. Residues 98-111 (AVSLEKKLQNATNY) are Cytoplasmic-facing. The chain crosses the membrane as a helical span at residues 112–137 (FLMSLAIADMLLGFLVMPVSMLTILY). The Extracellular segment spans residues 138 to 146 (GYRWPLPSK). The helical transmembrane segment at 147-171 (LCAVWIYLDVLFSTASIMHLCAISL) threads the bilayer. A disulfide bridge connects residues cysteine 148 and cysteine 227. Residue aspartate 155 participates in serotonin binding. Residues 172-174 (DRY) carry the DRY motif; important for ligand-induced conformation changes motif. The Cytoplasmic portion of the chain corresponds to 172 to 191 (DRYVAIQNPIHHSRFNSRTK). Residues 192–215 (AFLKIIAVWTISVGISMPIPVFGL) traverse the membrane as a helical segment. The Extracellular portion of the chain corresponds to 216–232 (QDDSKVFKEGSCLLADD). Residues 233–258 (NFVLIGSFVSFFIPLTIMVITYFLTI) traverse the membrane as a helical segment. The Cytoplasmic segment spans residues 259 to 322 (KSLQKEATLC…QSISNEQKAC (64 aa)). The residue at position 280 (serine 280) is a Phosphoserine. A helical transmembrane segment spans residues 323–348 (KVLGIVFSLFVVMWCPFFITNIMAVI). Residue asparagine 343 coordinates serotonin. An intrachain disulfide couples cysteine 349 to cysteine 353. Residues 349–356 (CKESCNED) are Extracellular-facing. The chain crosses the membrane as a helical span at residues 357–382 (VIGALLNVFVWIGYLSSAVNPLVYTL). The NPxxY motif; important for ligand-induced conformation changes and signaling motif lies at 376–380 (NPLVY). Over 383 to 471 (FNKTYRSAFS…DGVNEKVSCV (89 aa)) the chain is Cytoplasmic. The disordered stretch occupies residues 450–471 (KQHSEDASKDNSDGVNEKVSCV). The span at 451 to 465 (QHSEDASKDNSDGVN) shows a compositional bias: basic and acidic residues. Positions 469–471 (SCV) match the PDZ-binding motif.

This sequence belongs to the G-protein coupled receptor 1 family. In terms of assembly, interacts (via C-terminus) with MPDZ and PATJ. May interact (via C-terminus) with MPP3, PRDX6, DLG4, DLG1, CASK, APBA1 and MAGI2. Interacts with GRM2 and DRD2; this may affect signaling.

The protein localises to the cell membrane. The protein resides in the cell projection. It localises to the dendrite. Its subcellular location is the axon. It is found in the cytoplasmic vesicle. The protein localises to the membrane. The protein resides in the caveola. It localises to the presynapse. With respect to regulation, G-protein coupled receptor activity is regulated by lipids: oleamide increases HTR2A-mediated activity. G-protein coupled receptor for 5-hydroxytryptamine (serotonin). Also functions as a receptor for various drugs and psychoactive substances, including mescaline, psilocybin, 1-(2,5-dimethoxy-4-iodophenyl)-2-aminopropane (DOI) and lysergic acid diethylamide (LSD). Ligand binding causes a conformation change that triggers signaling via guanine nucleotide-binding proteins (G proteins) and modulates the activity of downstream effectors. HTR2A is coupled to G(q)/G(11) G alpha proteins and activates phospholipase C-beta, releasing diacylglycerol (DAG) and inositol 1,4,5-trisphosphate (IP3) second messengers that modulate the activity of phosphatidylinositol 3-kinase and promote the release of Ca(2+) ions from intracellular stores, respectively. Beta-arrestin family members inhibit signaling via G proteins and mediate activation of alternative signaling pathways. Affects neural activity, perception, cognition and mood. Plays a role in the regulation of behavior, including responses to anxiogenic situations and psychoactive substances. Plays a role in intestinal smooth muscle contraction, and may play a role in arterial vasoconstriction. This Pongo pygmaeus (Bornean orangutan) protein is 5-hydroxytryptamine receptor 2A (HTR2A).